We begin with the raw amino-acid sequence, 45 residues long: Photosystem II reaction center protein K (45 aa).

The propeptide occupies 1–8 (MDVNFLLS). A helical transmembrane segment spans residues 20 to 40 (IVDVMPAIPVFFLLLAFVWQA).

The protein belongs to the PsbK family. PSII is composed of 1 copy each of membrane proteins PsbA, PsbB, PsbC, PsbD, PsbE, PsbF, PsbH, PsbI, PsbJ, PsbK, PsbL, PsbM, PsbT, PsbX, PsbY, PsbZ, Psb30/Ycf12, at least 3 peripheral proteins of the oxygen-evolving complex and a large number of cofactors. It forms dimeric complexes.

Its subcellular location is the plastid. The protein localises to the chloroplast thylakoid membrane. In terms of biological role, one of the components of the core complex of photosystem II (PSII). PSII is a light-driven water:plastoquinone oxidoreductase that uses light energy to abstract electrons from H(2)O, generating O(2) and a proton gradient subsequently used for ATP formation. It consists of a core antenna complex that captures photons, and an electron transfer chain that converts photonic excitation into a charge separation. This chain is Photosystem II reaction center protein K, found in Emiliania huxleyi (Coccolithophore).